The chain runs to 906 residues: Centromere protein C (906 aa).

Polar residues-rich tracts occupy residues 56–74 (SLTS…SSSK) and 87–96 (SSRTGEASLQ). 2 disordered regions span residues 56–115 (SLTS…NEVH) and 141–169 (QKAA…NKNI). Residues S71 and S94 each carry the phosphoserine modification. The span at 97 to 108 (ASAEPSEAAGGS) shows a compositional bias: low complexity. Residues K150 and K182 each participate in a glycyl lysine isopeptide (Lys-Gly) (interchain with G-Cter in SUMO2) cross-link. The segment at 197 to 224 (VEDNLSKGQEGTSSEITQKRDDLSSDVQ) is disordered. Residues 202–212 (SKGQEGTSSEI) show a composition bias toward polar residues. Residues 228–242 (KKNFSELFLETVKRK) carry the Nuclear localization signal motif. Residues K229, K240, K242, and K266 each participate in a glycyl lysine isopeptide (Lys-Gly) (interchain with G-Cter in SUMO2) cross-link. Disordered regions lie at residues 294–320 (RHLS…KSHS), 341–596 (AQLS…SLAI), and 623–671 (EYTS…EQDQ). S302, S344, S363, and S404 each carry phosphoserine. The segment covering 402–424 (GQSSWENSNVSNTGQDKLQINSK) has biased composition (polar residues). Basic and acidic residues predominate over residues 426–450 (NMKDCEEVRNEPNPKKQKPALENKK). Residues 449 to 466 (KKKTNSTQTNKEKSGKKF) carry the Nuclear localization signal motif. Positions 465–474 (KFFSGGSKNK) are enriched in low complexity. Residues 481 to 494 (TLTSRRSCRISQRP) are compositionally biased toward polar residues. A Phosphoserine modification is found at S495. The span at 496–512 (EWWRVKSDESSVDRNPS) shows a compositional bias: basic and acidic residues. K501 participates in a covalent cross-link: Glycyl lysine isopeptide (Lys-Gly) (interchain with G-Cter in SUMO2). S505 carries the phosphoserine modification. Over residues 523-546 (NKKKQTKRNHVSKRAGKKPGSSKR) the composition is skewed to basic residues. A Nuclear localization signal motif is present at residues 525 to 540 (KKQTKRNHVSKRAGKK). Positions 626–637 (SKTQMESASNSE) are enriched in polar residues. Residue K640 forms a Glycyl lysine isopeptide (Lys-Gly) (interchain with G-Cter in SUMO2) linkage. A phosphoserine mark is found at S647 and S673. K692 is covalently cross-linked (Glycyl lysine isopeptide (Lys-Gly) (interchain with G-Cter in SUMO2)). The MIF2 homology domain II stretch occupies residues 702 to 724 (VRRSNRIRLKPLEYWRGERVDYQ). Phosphoserine occurs at positions 728 and 737. The short motif at 744–762 (KIKAQRNLGKVNKKVTKKP) is the Nuclear localization signal element. A Glycyl lysine isopeptide (Lys-Gly) (interchain with G-Cter in SUMO2) cross-link involves residue K770. The MIF2 homology domain III stretch occupies residues 853-906 (LVFYVNFGDLLCTLHETPYKLTTGDSFYVPSGNHYNIKNLLNVESSLLFTQIKR).

The protein belongs to the CENP-C/MIF2 family. Oligomer. Component of the CENPA-NAC complex, at least composed of CENPA, CENPC, CENPH, CENPM, CENPN, CENPT and CENPU. The CENPA-NAC complex interacts with the CENPA-CAD complex, composed of CENPI, CENPK, CENPL, CENPO, CENPP, CENPQ, CENPR and CENPS. Binds to DAXX. Interacts with DNMT3B. Interacts directly with CENPA. Identified in a centromere complex containing histones H2A, H2B and H4, and at least CENPA, CENPB, CENPC, CENPT, CENPN, HJURP, SUPT16H, SSRP1 and RSF1. Interacts with MEIKIN.

It localises to the nucleus. The protein resides in the chromosome. Its subcellular location is the centromere. It is found in the kinetochore. Functionally, component of the CENPA-NAC (nucleosome-associated) complex, a complex that plays a central role in assembly of kinetochore proteins, mitotic progression and chromosome segregation. The CENPA-NAC complex recruits the CENPA-CAD (nucleosome distal) complex and may be involved in incorporation of newly synthesized CENPA into centromeres. CENPC recruits DNA methylation and DNMT3B to both centromeric and pericentromeric satellite repeats and regulates the histone code in these regions. In Mus musculus (Mouse), this protein is Centromere protein C (Cenpc).